A 235-amino-acid chain; its full sequence is Nitrile hydratase subunit beta (235 aa).

Belongs to the nitrile hydratase subunit beta family. Heterodimer of an alpha and a beta chain.

The catalysed reaction is an aliphatic primary amide = an aliphatic nitrile + H2O. Functionally, NHase catalyzes the hydration of various nitrile compounds to the corresponding amides. The polypeptide is Nitrile hydratase subunit beta (nthB) (Rhodococcus sp).